The sequence spans 305 residues: Probable 4-deoxy-4-formamido-L-arabinose-phosphoundecaprenol deformylase ArnD (305 aa).

Residues 7–262 form the NodB homology domain; sequence TKVGLRIDVD…QAKENNIEFV (256 aa).

This sequence belongs to the polysaccharide deacetylase family. ArnD deformylase subfamily.

It carries out the reaction 4-deoxy-4-formamido-alpha-L-arabinopyranosyl di-trans,octa-cis-undecaprenyl phosphate + H2O = 4-amino-4-deoxy-alpha-L-arabinopyranosyl di-trans,octa-cis-undecaprenyl phosphate + formate. Its pathway is glycolipid biosynthesis; 4-amino-4-deoxy-alpha-L-arabinose undecaprenyl phosphate biosynthesis; 4-amino-4-deoxy-alpha-L-arabinose undecaprenyl phosphate from UDP-4-deoxy-4-formamido-beta-L-arabinose and undecaprenyl phosphate: step 2/2. It functions in the pathway bacterial outer membrane biogenesis; lipopolysaccharide biosynthesis. Functionally, catalyzes the deformylation of 4-deoxy-4-formamido-L-arabinose-phosphoundecaprenol to 4-amino-4-deoxy-L-arabinose-phosphoundecaprenol. The modified arabinose is attached to lipid A and is required for resistance to polymyxin and cationic antimicrobial peptides. This chain is Probable 4-deoxy-4-formamido-L-arabinose-phosphoundecaprenol deformylase ArnD, found in Shewanella sediminis (strain HAW-EB3).